A 569-amino-acid chain; its full sequence is Retrotransposon Gag-like protein 5 (569 aa).

2 disordered regions span residues 115–151 (DGPA…LERP) and 323–506 (RNII…PSRR). Pro residues predominate over residues 117–146 (PADPPLLPIPPPPALPPPASKEPPPQPPLA). A compositionally biased stretch (acidic residues) spans 334 to 350 (NEEESEDEEYYSEDEDQ). Residues 353-367 (RRHRLHSKDQRKRMR) are compositionally biased toward basic residues. Composition is skewed to basic and acidic residues over residues 372–392 (EMKE…KKEE) and 401–415 (MKQK…NKNE). Composition is skewed to acidic residues over residues 416-429 (EEGE…EDED) and 443-469 (GTEE…ELME). Residues 476–485 (HASSQTSGPT) show a composition bias toward polar residues.

In Homo sapiens (Human), this protein is Retrotransposon Gag-like protein 5.